A 224-amino-acid chain; its full sequence is Outer envelope pore protein 24, chloroplastic (224 aa).

M1 is a topological domain (cytoplasmic). Residues 2-11 (KATVKGRYEG) form a beta stranded membrane-spanning segment. Over 12 to 16 (DKATA) the chain is Chloroplast intermembrane. A beta stranded membrane pass occupies residues 17–28 (AATLAFTPSAAD). Over 29–32 (LRFK) the chain is Cytoplasmic. The beta stranded transmembrane segment at 33-42 (ASATDAAFAR) threads the bilayer. Over 43–55 (GPSLEGLILTLEK) the chain is Chloroplast intermembrane. The chain crosses the membrane as a beta stranded span at residues 56–64 (PGSFLLDLK). The Cytoplasmic portion of the chain corresponds to 65–70 (PHSKDV). The chain crosses the membrane as a beta stranded span at residues 71–80 (RFQFMNSALL). The Chloroplast intermembrane portion of the chain corresponds to 81–101 (LDRRVSLTYTHSTTLSPGPAK). Residues 102–111 (LPARTALDGS) traverse the membrane as a beta stranded segment. The Cytoplasmic segment spans residues 112–116 (LTFDP). Residues 117-126 (ANKLSLSHTL) form a beta stranded membrane-spanning segment. The Chloroplast intermembrane segment spans residues 127–130 (GSSG). Residues 131-140 (CRVKYSYAHG) traverse the membrane as a beta stranded segment. The Cytoplasmic portion of the chain corresponds to 141–154 (QDRLTTIEPCFDTA). A beta stranded transmembrane segment spans residues 155 to 166 (NNAWDFAVTRKF). Residues 167–169 (QGG) lie on the Chloroplast intermembrane side of the membrane. Residues 170-178 (DAIKATYQA) traverse the membrane as a beta stranded segment. Topologically, residues 179 to 180 (ST) are cytoplasmic. The beta stranded transmembrane segment at 181–189 (KLLALDWTR) threads the bilayer. At 190–212 (DSKIGASFKVAASFDLSDQSKAP) the chain is on the chloroplast intermembrane side. A beta stranded transmembrane segment spans residues 213-222 (KLIAESTWNY). The Cytoplasmic portion of the chain corresponds to 223-224 (EI).

Belongs to the plastid outer envelope porin OEP24 (TC 1.B.28.1) family. As to quaternary structure, homooligomers form large rather nonselective pores in plastidial outer membranes.

It localises to the plastid. The protein resides in the etioplast membrane. Its subcellular location is the chloroplast outer membrane. Functionally, high-conductance voltage-dependent solute channel with a slight selectivity for cations transporting triosephosphates, dicarboxylic acids, ATP, inorganic phosphate (Pi), sugars, and positively or negatively charged amino acids. The polypeptide is Outer envelope pore protein 24, chloroplastic (OEP24) (Oryza sativa subsp. japonica (Rice)).